Here is a 192-residue protein sequence, read N- to C-terminus: Ion-translocating oxidoreductase complex subunit B (192 aa).

The interval M1–S26 is hydrophobic. One can recognise a 4Fe-4S domain in the interval E32–V91. Residues C49, C52, C57, C74, C117, C120, C123, C127, C147, C150, C153, and C157 each coordinate [4Fe-4S] cluster. 2 consecutive 4Fe-4S ferredoxin-type domains span residues M108–R137 and A138–V167.

This sequence belongs to the 4Fe4S bacterial-type ferredoxin family. RnfB subfamily. The complex is composed of six subunits: RsxA, RsxB, RsxC, RsxD, RsxE and RsxG. The cofactor is [4Fe-4S] cluster.

It is found in the cell inner membrane. Functionally, part of a membrane-bound complex that couples electron transfer with translocation of ions across the membrane. Required to maintain the reduced state of SoxR. The sequence is that of Ion-translocating oxidoreductase complex subunit B from Shigella dysenteriae serotype 1 (strain Sd197).